The chain runs to 625 residues: Sorting nexin-41 (625 aa).

Residues 1–90 (MDYNIFEAVH…STSSHAVVEA (90 aa)) are disordered. The span at 54–86 (SPPSSSSLPSSPAHSSSAGSSRASTSSSTSSHA) shows a compositional bias: low complexity. Residues 98 to 235 (VSLSMSTTAT…QKFLNPEFNW (138 aa)) enclose the PX domain. Residues Arg-153, Ser-155, Lys-179, and Arg-202 each coordinate a 1,2-diacyl-sn-glycero-3-phospho-(1D-myo-inositol-3-phosphate). Coiled coils occupy residues 437–469 (QFKI…NESL) and 539–563 (QLTE…KDCL).

This sequence belongs to the sorting nexin family. As to quaternary structure, binds to SNX4.

It localises to the prevacuolar compartment. It is found in the endosome. Its subcellular location is the endosome membrane. Its function is as follows. Involved in proper sorting of the v-SNARE protein SNC1. This Saccharomyces cerevisiae (strain ATCC 204508 / S288c) (Baker's yeast) protein is Sorting nexin-41 (SNX41).